The chain runs to 347 residues: Transcription factor JunB (347 aa).

Residues K4, K33, and K36 each participate in a glycyl lysine isopeptide (Lys-Gly) (interchain with G-Cter in SUMO2) cross-link. The disordered stretch occupies residues 51–73 (KAPGARGPGPEGGGGGSYFSGQG). The segment covering 56-68 (RGPGPEGGGGGSY) has biased composition (gly residues). K81 is covalently cross-linked (Glycyl lysine isopeptide (Lys-Gly) (interchain with G-Cter in SUMO2)). Residues T102 and T104 each carry the phosphothreonine modification. S117 carries the phosphoserine modification. K141 is covalently cross-linked (Glycyl lysine isopeptide (Lys-Gly) (interchain with G-Cter in SUMO2)). Basic and acidic residues predominate over residues 239-253 (FKEEPQTVPEARSRD). The tract at residues 239 to 260 (FKEEPQTVPEARSRDATPPVSP) is disordered. K240 bears the N6-acetyllysine; alternate mark. K240 is covalently cross-linked (Glycyl lysine isopeptide (Lys-Gly) (interchain with G-Cter in SUMO1); alternate). A Glycyl lysine isopeptide (Lys-Gly) (interchain with G-Cter in SUMO2); alternate cross-link involves residue K240. At S251 the chain carries Phosphoserine. Phosphothreonine is present on T255. Residue S259 is modified to Phosphoserine. The basic motif stretch occupies residues 268–295 (RIKVERKRLRNRLAATKCRKRKLERIAR). The bZIP domain maps to 268-331 (RIKVERKRLR…AQLKQKVMTH (64 aa)). The segment at 296-324 (LEDKVKTLKAENAGLSSTAGLLREQVAQL) is leucine-zipper. K343 participates in a covalent cross-link: Glycyl lysine isopeptide (Lys-Gly) (interchain with G-Cter in SUMO2).

Belongs to the bZIP family. Jun subfamily. Binds DNA as a homodimer or as a heterodimer with another member of the Jun/Fos family. Component of an AP-1 transcription factor complex composed of JUN-FOS heterodimers composed of JUN-FOS heterodimers. As part of the AP-1 transcription factor complex, forms heterodimers with FOSB, thereby binding to the AP-1 consensus sequence and stimulating transcription. Interacts with ITCH (via its WW domains). Ubiquitinated by ITCH, leading to its degradation.

The protein localises to the nucleus. Its function is as follows. Transcription factor involved in regulating gene activity following the primary growth factor response. Binds to the DNA sequence 5'-TGA[GC]TCA-3'. Heterodimerizes with proteins of the FOS family to form an AP-1 transcription complex, thereby enhancing its DNA binding activity to an AP-1 consensus sequence and its transcriptional activity. This is Transcription factor JunB (JUNB) from Homo sapiens (Human).